The sequence spans 232 residues: Ubiquinone biosynthesis O-methyltransferase (232 aa).

Residues Arg36, Gly55, Asp76, and Met120 each coordinate S-adenosyl-L-methionine.

It belongs to the methyltransferase superfamily. UbiG/COQ3 family.

It carries out the reaction a 3-demethylubiquinol + S-adenosyl-L-methionine = a ubiquinol + S-adenosyl-L-homocysteine + H(+). It catalyses the reaction a 3-(all-trans-polyprenyl)benzene-1,2-diol + S-adenosyl-L-methionine = a 2-methoxy-6-(all-trans-polyprenyl)phenol + S-adenosyl-L-homocysteine + H(+). It participates in cofactor biosynthesis; ubiquinone biosynthesis. In terms of biological role, O-methyltransferase that catalyzes the 2 O-methylation steps in the ubiquinone biosynthetic pathway. This is Ubiquinone biosynthesis O-methyltransferase from Paraburkholderia phytofirmans (strain DSM 17436 / LMG 22146 / PsJN) (Burkholderia phytofirmans).